The following is a 790-amino-acid chain: Nuclear cap-binding protein subunit 1 (790 aa).

The segment at 1–26 (MSRRRHSYENDGGQPHKRRKTSDANE) is disordered. The short motif at 3–20 (RRRHSYENDGGQPHKRRK) is the Nuclear localization signal element. Ser7 is modified (phosphoserine). Thr21 is modified (phosphothreonine). 2 positions are modified to phosphoserine: Ser22 and Ser201. The region spanning 28–240 (EDHLESLICK…CLWAQIQKLK (213 aa)) is the MIF4G domain. Lys204 carries the post-translational modification N6-acetyllysine. A coiled-coil region spans residues 643 to 713 (STIRKMNKHV…SEQKNLFLVI (71 aa)). Residue Lys684 forms a Glycyl lysine isopeptide (Lys-Gly) (interchain with G-Cter in SUMO2) linkage. At Lys698 the chain carries N6-acetyllysine.

This sequence belongs to the NCBP1 family. As to quaternary structure, component of the nuclear cap-binding complex (CBC), a heterodimer composed of NCBP1/CBP80 and NCBP2/CBP20 that interacts with m7GpppG-capped RNA. Found in a U snRNA export complex containing PHAX/RNUXA, NCBP1/CBP80, NCBP2/CBP20, RAN, XPO1 and m7G-capped RNA. Identified in a IGF2BP1-dependent mRNP granule complex containing untranslated mRNAs. Interacts with PHAX/RNUXA, SRRT/ARS2, EIF4G2, IGF2BP1, HNRNPF, HNRNPH1, KIAA0427/CTIF, PARN, DROSHA, UPF1 and ALYREF/THOC4. May interact with EIF4G1; the interaction is however controversial since it is reported by, and, but is not observed by. The large PER complex involved in the repression of transcriptional termination is composed of at least PER2, CDK9, DDX5, DHX9, NCBP1/CBP80 and POLR2A. Component of an alternative nuclear cap-binding complex (CBC) composed of NCBP1/CBP80 and NCBP3. Interacts with METTL3. Interacts with ZFC3H1 in a RNase-insensitive manner. Interacts with MTREX. Interacts with TASOR. Interacts with DHX34; the interaction is RNA-dependent. Interacts with KPNA3. Post-translationally, dephosphorylated at Thr-21 by the PNUTS-PP1 complex during RNA polymerase II transcription pause-release.

It is found in the nucleus. The protein resides in the cytoplasm. Functionally, component of the cap-binding complex (CBC), which binds cotranscriptionally to the 5'-cap of pre-mRNAs and is involved in various processes such as pre-mRNA splicing, translation regulation, nonsense-mediated mRNA decay, RNA-mediated gene silencing (RNAi) by microRNAs (miRNAs) and mRNA export. The CBC complex is involved in mRNA export from the nucleus via its interaction with ALYREF/THOC4/ALY, leading to the recruitment of the mRNA export machinery to the 5'-end of mRNA and to mRNA export in a 5' to 3' direction through the nuclear pore. The CBC complex is also involved in mediating U snRNA and intronless mRNAs export from the nucleus. The CBC complex is essential for a pioneer round of mRNA translation, before steady state translation when the CBC complex is replaced by cytoplasmic cap-binding protein eIF4E. The pioneer round of mRNA translation mediated by the CBC complex plays a central role in nonsense-mediated mRNA decay (NMD), NMD only taking place in mRNAs bound to the CBC complex, but not on eIF4E-bound mRNAs. The CBC complex enhances NMD in mRNAs containing at least one exon-junction complex (EJC) via its interaction with UPF1, promoting the interaction between UPF1 and UPF2. The CBC complex is also involved in 'failsafe' NMD, which is independent of the EJC complex, while it does not participate in Staufen-mediated mRNA decay (SMD). During cell proliferation, the CBC complex is also involved in microRNAs (miRNAs) biogenesis via its interaction with SRRT/ARS2 and is required for miRNA-mediated RNA interference. The CBC complex also acts as a negative regulator of PARN, thereby acting as an inhibitor of mRNA deadenylation. In the CBC complex, NCBP1/CBP80 does not bind directly capped RNAs (m7GpppG-capped RNA) but is required to stabilize the movement of the N-terminal loop of NCBP2/CBP20 and lock the CBC into a high affinity cap-binding state with the cap structure. Associates with NCBP3 to form an alternative cap-binding complex (CBC) which plays a key role in mRNA export and is particularly important in cellular stress situations such as virus infections. The conventional CBC with NCBP2 binds both small nuclear RNA (snRNA) and messenger (mRNA) and is involved in their export from the nucleus whereas the alternative CBC with NCBP3 does not bind snRNA and associates only with mRNA thereby playing a role only in mRNA export. NCBP1/CBP80 is required for cell growth and viability. This chain is Nuclear cap-binding protein subunit 1 (Ncbp1), found in Rattus norvegicus (Rat).